A 76-amino-acid polypeptide reads, in one-letter code: Serine proteinase inhibitor IA-1 (76 aa).

Residue Ser-1 is modified to N-acetylserine.

Belongs to the protease inhibitor I9 family.

In terms of biological role, specifically inhibits an endogenous intracellular serine proteinase (proteinase A). This chain is Serine proteinase inhibitor IA-1, found in Pleurotus ostreatus (Oyster mushroom).